The chain runs to 70 residues: ATP synthase subunit c (70 aa).

The next 2 helical transmembrane spans lie at 4–24 (IAAG…NGLV) and 47–67 (FLGV…AFLV).

Belongs to the ATPase C chain family. As to quaternary structure, F-type ATPases have 2 components, F(1) - the catalytic core - and F(0) - the membrane proton channel. F(1) has five subunits: alpha(3), beta(3), gamma(1), delta(1), epsilon(1). F(0) has three main subunits: a(1), b(2) and c(10-14). The alpha and beta chains form an alternating ring which encloses part of the gamma chain. F(1) is attached to F(0) by a central stalk formed by the gamma and epsilon chains, while a peripheral stalk is formed by the delta and b chains.

Its subcellular location is the cell membrane. F(1)F(0) ATP synthase produces ATP from ADP in the presence of a proton or sodium gradient. F-type ATPases consist of two structural domains, F(1) containing the extramembraneous catalytic core and F(0) containing the membrane proton channel, linked together by a central stalk and a peripheral stalk. During catalysis, ATP synthesis in the catalytic domain of F(1) is coupled via a rotary mechanism of the central stalk subunits to proton translocation. In terms of biological role, key component of the F(0) channel; it plays a direct role in translocation across the membrane. A homomeric c-ring of between 10-14 subunits forms the central stalk rotor element with the F(1) delta and epsilon subunits. The protein is ATP synthase subunit c of Limosilactobacillus fermentum (strain NBRC 3956 / LMG 18251) (Lactobacillus fermentum).